Consider the following 222-residue polypeptide: Octanoyltransferase (222 aa).

The BPL/LPL catalytic domain occupies 34-214 (AEAPSTVLLL…EFRKHEEALV (181 aa)). Residues 72-79 (RGGKLTWH), 144-146 (AIG), and 157-159 (GIA) each bind substrate. Residue cysteine 175 is the Acyl-thioester intermediate of the active site.

It belongs to the LipB family.

The protein localises to the cytoplasm. The catalysed reaction is octanoyl-[ACP] + L-lysyl-[protein] = N(6)-octanoyl-L-lysyl-[protein] + holo-[ACP] + H(+). It participates in protein modification; protein lipoylation via endogenous pathway; protein N(6)-(lipoyl)lysine from octanoyl-[acyl-carrier-protein]: step 1/2. In terms of biological role, catalyzes the transfer of endogenously produced octanoic acid from octanoyl-acyl-carrier-protein onto the lipoyl domains of lipoate-dependent enzymes. Lipoyl-ACP can also act as a substrate although octanoyl-ACP is likely to be the physiological substrate. This Arthrobacter sp. (strain FB24) protein is Octanoyltransferase.